The following is a 319-amino-acid chain: tRNA uridine(34) hydroxylase (319 aa).

In terms of domain architecture, Rhodanese spans 125 to 219 (LDENTVVIDA…YGKDPEVQGD (95 aa)). The active-site Cysteine persulfide intermediate is the Cys179.

Belongs to the TrhO family.

It carries out the reaction uridine(34) in tRNA + AH2 + O2 = 5-hydroxyuridine(34) in tRNA + A + H2O. Its function is as follows. Catalyzes oxygen-dependent 5-hydroxyuridine (ho5U) modification at position 34 in tRNAs. The chain is tRNA uridine(34) hydroxylase from Lactococcus lactis subsp. cremoris (strain MG1363).